The chain runs to 213 residues: Kynurenine formamidase (213 aa).

W18 is a binding site for substrate. H48, H52, and D54 together coordinate Zn(2+). The active-site Proton donor/acceptor is H58. Zn(2+) is bound by residues H160 and E172.

This sequence belongs to the Cyclase 1 superfamily. KynB family. Homodimer. It depends on Zn(2+) as a cofactor.

It catalyses the reaction N-formyl-L-kynurenine + H2O = L-kynurenine + formate + H(+). It participates in amino-acid degradation; L-tryptophan degradation via kynurenine pathway; L-kynurenine from L-tryptophan: step 2/2. Catalyzes the hydrolysis of N-formyl-L-kynurenine to L-kynurenine, the second step in the kynurenine pathway of tryptophan degradation. The sequence is that of Kynurenine formamidase from Burkholderia mallei (strain NCTC 10247).